The primary structure comprises 130 residues: Seminal plasma protein pB1 (130 aa).

The first 25 residues, 1–25 (MAPRLGIFLLWAGVSVFLPLDPVNG), serve as a signal peptide directing secretion. Fibronectin type-II domains follow at residues 39-83 (TSDD…YCRS) and 84-130 (TDYA…WRYC). Intrachain disulfides connect Cys44–Cys68, Cys58–Cys81, Cys89–Cys115, and Cys103–Cys130.

It belongs to the seminal plasma protein family. As to expression, component of seminal plasma.

It localises to the secreted. Its function is as follows. May form a complex with spermadhesin AQN-1 which possesses phosphorylcholine-binding activity. This Sus scrofa (Pig) protein is Seminal plasma protein pB1.